The sequence spans 181 residues: HGPRTase-like protein 2 (181 aa).

This sequence belongs to the purine/pyrimidine phosphoribosyltransferase family. Archaeal HPRT subfamily.

In terms of biological role, may catalyze a purine salvage reaction, the substrate is unknown. The chain is HGPRTase-like protein 2 from Natrialba magadii (strain ATCC 43099 / DSM 3394 / CCM 3739 / CIP 104546 / IAM 13178 / JCM 8861 / NBRC 102185 / NCIMB 2190 / MS3) (Natronobacterium magadii).